A 297-amino-acid polypeptide reads, in one-letter code: Homoserine kinase (297 aa).

Residue 84 to 94 (PPARGLGSSAT) participates in ATP binding.

Belongs to the GHMP kinase family. Homoserine kinase subfamily.

It is found in the cytoplasm. It carries out the reaction L-homoserine + ATP = O-phospho-L-homoserine + ADP + H(+). It participates in amino-acid biosynthesis; L-threonine biosynthesis; L-threonine from L-aspartate: step 4/5. Catalyzes the ATP-dependent phosphorylation of L-homoserine to L-homoserine phosphate. This Aquifex aeolicus (strain VF5) protein is Homoserine kinase (thrB).